The primary structure comprises 286 residues: Putative L-ribulose-5-phosphate 3-epimerase SgbU (286 aa).

It belongs to the L-ribulose-5-phosphate 3-epimerase family.

The enzyme catalyses L-ribulose 5-phosphate = L-xylulose 5-phosphate. Catalyzes the isomerization of L-xylulose-5-phosphate to L-ribulose-5-phosphate. The polypeptide is Putative L-ribulose-5-phosphate 3-epimerase SgbU (sgbU) (Haemophilus influenzae (strain ATCC 51907 / DSM 11121 / KW20 / Rd)).